The chain runs to 224 residues: Putative O-methyltransferase MUL_4520 (224 aa).

Over residues 1–11 (MHGTDSSSDTP) the composition is skewed to polar residues. Residues 1–20 (MHGTDSSSDTPGQPAPSRAE) are disordered. S-adenosyl-L-methionine is bound by residues valine 51, glutamate 73, 75 to 76 (GT), serine 81, aspartate 99, and isoleucine 100. Aspartate 147 is a substrate binding site. Position 149 (aspartate 149) interacts with S-adenosyl-L-methionine.

This sequence belongs to the class I-like SAM-binding methyltransferase superfamily. Cation-dependent O-methyltransferase family.

In Mycobacterium ulcerans (strain Agy99), this protein is Putative O-methyltransferase MUL_4520.